Reading from the N-terminus, the 205-residue chain is GTP cyclohydrolase-2 (205 aa).

49 to 53 (RIHSE) contacts GTP. Residues C54, C65, and C67 each contribute to the Zn(2+) site. GTP is bound by residues Q70, 92–94 (EGR), and T114. D126 serves as the catalytic Proton acceptor. The active-site Nucleophile is the R128. T149 and K154 together coordinate GTP.

It belongs to the GTP cyclohydrolase II family. The cofactor is Zn(2+).

It carries out the reaction GTP + 4 H2O = 2,5-diamino-6-hydroxy-4-(5-phosphoribosylamino)-pyrimidine + formate + 2 phosphate + 3 H(+). It participates in cofactor biosynthesis; riboflavin biosynthesis; 5-amino-6-(D-ribitylamino)uracil from GTP: step 1/4. Functionally, catalyzes the conversion of GTP to 2,5-diamino-6-ribosylamino-4(3H)-pyrimidinone 5'-phosphate (DARP), formate and pyrophosphate. The protein is GTP cyclohydrolase-2 of Shewanella amazonensis (strain ATCC BAA-1098 / SB2B).